We begin with the raw amino-acid sequence, 358 residues long: DnaJ homolog subfamily B member 11 (358 aa).

Residues 1 to 22 form the signal peptide; sequence MAPQNLGTFCLLLLYLIGTVIA. Residues 25–90 form the J domain; it reads DFYKILGVPR…EKRKQYDTYG (66 aa). Thr188 is modified (phosphothreonine). An N-linked (GlcNAc...) asparagine glycan is attached at Asn261.

As to quaternary structure, part of a large chaperone multiprotein complex comprising DNAJB11, HSP90B1, HSPA5, HYOU, PDIA2, PDIA4, PDIA6, PPIB, SDF2L1, UGGT1 and very small amounts of ERP29, but not, or at very low levels, CALR nor CANX. Binds to denatured substrates in an ATP-independent manner. Interacts via the J domain with HSPA5 in an ATP-dependent manner. In terms of processing, contains high-mannose Endo H-sensitive carbohydrates. Cys-169, Cys-171, Cys-193 and Cys-196 form intramolecular disulfide bonds. The preferential partner for each Cys is not known.

It localises to the endoplasmic reticulum lumen. In terms of biological role, as a co-chaperone for HSPA5 it is required for proper folding, trafficking or degradation of proteins. Binds directly to both unfolded proteins that are substrates for ERAD and nascent unfolded peptide chains, but dissociates from the HSPA5-unfolded protein complex before folding is completed. May help recruiting HSPA5 and other chaperones to the substrate. Stimulates HSPA5 ATPase activity. It is necessary for maturation and correct trafficking of PKD1. The sequence is that of DnaJ homolog subfamily B member 11 (DNAJB11) from Bos taurus (Bovine).